Consider the following 384-residue polypeptide: Dihydrolipoyllysine-residue acetyltransferase component of pyruvate dehydrogenase complex (384 aa).

The region spanning 2 to 77 (ANEFKFTDVG…SIGQVMAVIG (76 aa)) is the Lipoyl-binding domain. An N6-lipoyllysine modification is found at K43. Residue H356 is part of the active site.

Belongs to the 2-oxoacid dehydrogenase family. As to quaternary structure, forms a 24-polypeptide structural core with octahedral symmetry. Requires (R)-lipoate as cofactor.

It catalyses the reaction N(6)-[(R)-dihydrolipoyl]-L-lysyl-[protein] + acetyl-CoA = N(6)-[(R)-S(8)-acetyldihydrolipoyl]-L-lysyl-[protein] + CoA. Its function is as follows. The pyruvate dehydrogenase complex catalyzes the overall conversion of pyruvate to acetyl-CoA and CO(2). It contains multiple copies of three enzymatic components: pyruvate dehydrogenase (E1), dihydrolipoamide acetyltransferase (E2) and lipoamide dehydrogenase (E3). The chain is Dihydrolipoyllysine-residue acetyltransferase component of pyruvate dehydrogenase complex (pdhC) from Mycoplasma genitalium (strain ATCC 33530 / DSM 19775 / NCTC 10195 / G37) (Mycoplasmoides genitalium).